The following is a 684-amino-acid chain: DNA-directed RNA polymerase subunit beta' (684 aa).

Zn(2+) contacts are provided by Cys69, Cys71, Cys87, and Cys90. Residues Asp489, Asp491, and Asp493 each coordinate Mg(2+).

Belongs to the RNA polymerase beta' chain family. RpoC1 subfamily. In plastids the minimal PEP RNA polymerase catalytic core is composed of four subunits: alpha, beta, beta', and beta''. When a (nuclear-encoded) sigma factor is associated with the core the holoenzyme is formed, which can initiate transcription. It depends on Mg(2+) as a cofactor. Zn(2+) serves as cofactor.

It localises to the plastid. The protein resides in the chloroplast. It catalyses the reaction RNA(n) + a ribonucleoside 5'-triphosphate = RNA(n+1) + diphosphate. Functionally, DNA-dependent RNA polymerase catalyzes the transcription of DNA into RNA using the four ribonucleoside triphosphates as substrates. The sequence is that of DNA-directed RNA polymerase subunit beta' from Marchantia polymorpha (Common liverwort).